Consider the following 136-residue polypeptide: ATP synthase epsilon chain (136 aa).

This sequence belongs to the ATPase epsilon chain family. In terms of assembly, F-type ATPases have 2 components, CF(1) - the catalytic core - and CF(0) - the membrane proton channel. CF(1) has five subunits: alpha(3), beta(3), gamma(1), delta(1), epsilon(1). CF(0) has three main subunits: a, b and c.

The protein localises to the cell inner membrane. Its function is as follows. Produces ATP from ADP in the presence of a proton gradient across the membrane. The sequence is that of ATP synthase epsilon chain from Myxococcus xanthus (strain DK1622).